The primary structure comprises 469 residues: 3-isopropylmalate dehydratase large subunit (469 aa).

Residues cysteine 350, cysteine 410, and cysteine 413 each contribute to the [4Fe-4S] cluster site.

This sequence belongs to the aconitase/IPM isomerase family. LeuC type 1 subfamily. As to quaternary structure, heterodimer of LeuC and LeuD. [4Fe-4S] cluster serves as cofactor.

The catalysed reaction is (2R,3S)-3-isopropylmalate = (2S)-2-isopropylmalate. Its pathway is amino-acid biosynthesis; L-leucine biosynthesis; L-leucine from 3-methyl-2-oxobutanoate: step 2/4. Its function is as follows. Catalyzes the isomerization between 2-isopropylmalate and 3-isopropylmalate, via the formation of 2-isopropylmaleate. This is 3-isopropylmalate dehydratase large subunit from Chelativorans sp. (strain BNC1).